A 236-amino-acid polypeptide reads, in one-letter code: Urease accessory protein UreG 2 (236 aa).

The interval 1–40 is disordered; sequence MEASVHIGNSVPHAHLHSAAPARPADPVRPDGSRRALRIG. A GTP-binding site is contributed by 43–50; it reads GPVGSGKT.

This sequence belongs to the SIMIBI class G3E GTPase family. UreG subfamily. In terms of assembly, homodimer. UreD, UreF and UreG form a complex that acts as a GTP-hydrolysis-dependent molecular chaperone, activating the urease apoprotein by helping to assemble the nickel containing metallocenter of UreC. The UreE protein probably delivers the nickel.

The protein resides in the cytoplasm. Its function is as follows. Facilitates the functional incorporation of the urease nickel metallocenter. This process requires GTP hydrolysis, probably effectuated by UreG. This Saccharopolyspora erythraea (strain ATCC 11635 / DSM 40517 / JCM 4748 / NBRC 13426 / NCIMB 8594 / NRRL 2338) protein is Urease accessory protein UreG 2.